Consider the following 254-residue polypeptide: Alcohol dehydrogenase 2 (254 aa).

10–33 (FVAGLGGIGFDTSREIVKSGPKNL) provides a ligand contact to NAD(+). Position 138 (S138) interacts with substrate. The active-site Proton acceptor is the Y151.

This sequence belongs to the short-chain dehydrogenases/reductases (SDR) family. As to quaternary structure, homodimer.

The catalysed reaction is a primary alcohol + NAD(+) = an aldehyde + NADH + H(+). It carries out the reaction a secondary alcohol + NAD(+) = a ketone + NADH + H(+). The polypeptide is Alcohol dehydrogenase 2 (Adh2) (Drosophila mulleri (Fruit fly)).